Reading from the N-terminus, the 53-residue chain is UPF0391 membrane protein Patl_1732 (53 aa).

A run of 2 helical transmembrane segments spans residues 4–24 (WAVI…GGIA) and 28–48 (AGIA…SVVM).

The protein belongs to the UPF0391 family.

Its subcellular location is the cell membrane. The sequence is that of UPF0391 membrane protein Patl_1732 from Pseudoalteromonas atlantica (strain T6c / ATCC BAA-1087).